The following is a 546-amino-acid chain: Putative inactive G-type lectin S-receptor-like serine/threonine-protein kinase SRK (546 aa).

An N-terminal signal peptide occupies residues 1–31 (MRGELPNKHHSYTFFVFLFFFLILFPDLSIS). Residues 32–441 (VNTLSATESL…FGERRTIRGK (410 aa)) are Extracellular-facing. In terms of domain architecture, Bulb-type lectin spans 34-154 (TLSATESLTI…KINESDEFLW (121 aa)). Asparagine 46, asparagine 120, asparagine 147, and asparagine 243 each carry an N-linked (GlcNAc...) asparagine glycan. One can recognise an EGF-like; atypical domain in the interval 293–329 (PKDTCDLYGICGPYAYCDMSTSPTCNCIKGFQPLSPQ). 4 cysteine pairs are disulfide-bonded: cysteine 297/cysteine 309, cysteine 303/cysteine 317, cysteine 378/cysteine 403, and cysteine 382/cysteine 388. The PAN domain maps to 348-428 (CGEDRFFRLM…DGQDLFVRLA (81 aa)). The N-linked (GlcNAc...) asparagine glycan is linked to asparagine 387. A helical transmembrane segment spans residues 442–462 (IIGLIIGISLMLVLSFIIYCF). The Cytoplasmic segment spans residues 463–546 (WKKKQKRARA…IVYKGRLLDG (84 aa)). The region spanning 524-546 (FSDSNILGRGGFGIVYKGRLLDG) is the Protein kinase domain. 530 to 538 (LGRGGFGIV) provides a ligand contact to ATP.

This sequence belongs to the protein kinase superfamily. Ser/Thr protein kinase family.

Its subcellular location is the cell membrane. Its function is as follows. Truncated and inactivated form of SRK, the female specificity determinant of self-incompatibility when active. Most A.thaliana cultivars contain such an inactive form and thus, are self-fertiles. In Arabidopsis thaliana (Mouse-ear cress), this protein is Putative inactive G-type lectin S-receptor-like serine/threonine-protein kinase SRK (PSEUDOSRKA).